The following is a 214-amino-acid chain: Probable chemoreceptor glutamine deamidase CheD (214 aa).

This sequence belongs to the CheD family.

The catalysed reaction is L-glutaminyl-[protein] + H2O = L-glutamyl-[protein] + NH4(+). Its function is as follows. Probably deamidates glutamine residues to glutamate on methyl-accepting chemotaxis receptors (MCPs), playing an important role in chemotaxis. The sequence is that of Probable chemoreceptor glutamine deamidase CheD from Vibrio vulnificus (strain YJ016).